A 195-amino-acid chain; its full sequence is Small ribosomal subunit protein uS4B (195 aa).

Positions Arg107 to Ala181 constitute an S4 RNA-binding domain. The disordered stretch occupies residues Thr161–Glu195. Lys180 participates in a covalent cross-link: Glycyl lysine isopeptide (Lys-Gly) (interchain with G-Cter in ubiquitin). Ser184 carries the phosphoserine modification.

The protein belongs to the universal ribosomal protein uS4 family. As to quaternary structure, component of the small ribosomal subunit (SSU). Mature yeast ribosomes consist of a small (40S) and a large (60S) subunit. The 40S small subunit contains 1 molecule of ribosomal RNA (18S rRNA) and 33 different proteins (encoded by 57 genes). The large 60S subunit contains 3 rRNA molecules (25S, 5.8S and 5S rRNA) and 46 different proteins (encoded by 81 genes). Interacts with snoRNA U3. uS11 interacts with MPP10. Component of the ribosomal small subunit (SSU) processome composed of at least 40 protein subunits and snoRNA U3.

It is found in the cytoplasm. The protein localises to the nucleus. The protein resides in the nucleolus. Component of the ribosome, a large ribonucleoprotein complex responsible for the synthesis of proteins in the cell. The small ribosomal subunit (SSU) binds messenger RNAs (mRNAs) and translates the encoded message by selecting cognate aminoacyl-transfer RNA (tRNA) molecules. The large subunit (LSU) contains the ribosomal catalytic site termed the peptidyl transferase center (PTC), which catalyzes the formation of peptide bonds, thereby polymerizing the amino acids delivered by tRNAs into a polypeptide chain. The nascent polypeptides leave the ribosome through a tunnel in the LSU and interact with protein factors that function in enzymatic processing, targeting, and the membrane insertion of nascent chains at the exit of the ribosomal tunnel. uS4 is involved in nucleolar processing of pre-18S ribosomal RNA and ribosome assembly. In Saccharomyces cerevisiae (strain ATCC 204508 / S288c) (Baker's yeast), this protein is Small ribosomal subunit protein uS4B.